The primary structure comprises 189 residues: Probable nicotinate-nucleotide adenylyltransferase (189 aa).

This sequence belongs to the NadD family.

It catalyses the reaction nicotinate beta-D-ribonucleotide + ATP + H(+) = deamido-NAD(+) + diphosphate. Its pathway is cofactor biosynthesis; NAD(+) biosynthesis; deamido-NAD(+) from nicotinate D-ribonucleotide: step 1/1. In terms of biological role, catalyzes the reversible adenylation of nicotinate mononucleotide (NaMN) to nicotinic acid adenine dinucleotide (NaAD). The sequence is that of Probable nicotinate-nucleotide adenylyltransferase from Bacillus licheniformis (strain ATCC 14580 / DSM 13 / JCM 2505 / CCUG 7422 / NBRC 12200 / NCIMB 9375 / NCTC 10341 / NRRL NRS-1264 / Gibson 46).